The sequence spans 1518 residues: Hormone receptor 4 (1518 aa).

Disordered stretches follow at residues 30–50 (RCSSDGESIADTSTSSPDLLA), 145–327 (TSST…KLSE), 380–587 (PSRI…QPQA), 672–820 (VGVG…SSVA), and 887–913 (SSNSTGLGGVGGGMGGRNLEAPHEPTD). A compositionally biased stretch (polar residues) spans 34-46 (DGESIADTSTSSP). 2 stretches are compositionally biased toward low complexity: residues 145–189 (TSST…SSSG) and 208–219 (SSSSAISAAAAS). The segment covering 238-260 (EGGGPAGDGSGATGGGNTSGGST) has biased composition (gly residues). Positions 291-323 (STTTTTGRPTLTPTNGVLSSASAGTGISTGSSA) are enriched in low complexity. Residues 400–429 (QRERERERDRERDRERERERDRDREREREQ) are compositionally biased toward basic and acidic residues. Composition is skewed to polar residues over residues 430 to 451 (SISSSQQHLSRVSASPPTQLSH) and 475 to 489 (RKSSPPTEHLLSQSM). Low complexity-rich tracts occupy residues 490 to 529 (QHLTQQQAIHLHHLLGQQQQQQQASHPQQQQQQQHSPHSL), 546 to 586 (HHQQ…QQPQ), 681 to 705 (GSVQCPSPHPSSSSSSSQLSPQTPS), and 738 to 799 (GQSH…PSSS). 2 stretches are compositionally biased toward gly residues: residues 800 to 812 (SGGGSVSGGGVGG) and 892 to 902 (GLGGVGGGMGG). Residues 918–993 (PLVCMICEDK…QGMVLQAVRE (76 aa)) constitute a DNA-binding region (nuclear receptor). NR C4-type zinc fingers lie at residues 921–941 (CMICEDKATGLHYGIITCEGC) and 957–976 (CVADGTCEITKAQRNRCQYC). Disordered regions lie at residues 1015-1101 (KHKK…AAVA), 1142-1210 (LLQA…LPPH), and 1341-1371 (KRRGEGGGSRHGSPASTPLSTPTGTPLSTPI). Low complexity predominate over residues 1021-1060 (QKQQQQAAQQQQQQAAAQQQHQQQQQHQQHQQHQQQQLHS). The segment covering 1061-1077 (PLHHHHHQGHQSHHAQQ) has biased composition (basic residues). 2 stretches are compositionally biased toward low complexity: residues 1078–1101 (QHHPQLSPHHLLSPQQQQLAAAVA) and 1144–1193 (QAPP…HHQQ). Positions 1194–1205 (QGGGGGGAGGGA) are enriched in gly residues. One can recognise an NR LBD domain in the interval 1250–1518 (HALGMIQTLI…PFVLNSASIR (269 aa)). Over residues 1351-1368 (HGSPASTPLSTPTGTPLS) the composition is skewed to low complexity.

It belongs to the nuclear hormone receptor family. NR1 subfamily. In terms of tissue distribution, during L2 and L3 stages, strong constitutive expression is seen in the ring gland. Lower expression is detected in specific neurons of the central nervous system (CNS) (at protein level).

The protein resides in the nucleus. Its function is as follows. Coordinates growth and maturation by mediating endocrine responses to the attainment of critical weight during larval development. Plays a central role in the genetic cascades triggered by the steroid hormone ecdysone at the onset of metamorphosis, acting as both a repressor of the early ecdysone-induced regulatory genes and an inducer of the ftz-f1 midprepupal competence factor. The chain is Hormone receptor 4 (Hr4) from Drosophila melanogaster (Fruit fly).